A 169-amino-acid chain; its full sequence is HTH-type transcriptional regulator PchR (169 aa).

The 144-residue stretch at 10–153 (YDIYVRLLHL…VLKFLEQLTS (144 aa)) folds into the HTH marR-type domain. The segment at residues 64 to 87 (NAGIARKMNLSKANVTKISTKLIK) is a DNA-binding region (H-T-H motif).

Homodimer.

In terms of biological role, represses the expression of the yvmC-cypX operon, which is involved in pulcherriminic acid biosynthesis. Also negatively regulates yvmA, yvnB and its own expression. Positively regulates yisI expression. Acts by binding specifically to a 14-bp palindromic motif, the YvmB box, which is present in the promoter region of the target genes. This Bacillus subtilis (strain 168) protein is HTH-type transcriptional regulator PchR.